We begin with the raw amino-acid sequence, 208 residues long: Uracil phosphoribosyltransferase (208 aa).

Residues arginine 78, arginine 103, and 130–138 (DPMFATGGT) each bind 5-phospho-alpha-D-ribose 1-diphosphate. Uracil-binding positions include isoleucine 193 and 198–200 (GDA). Residue aspartate 199 coordinates 5-phospho-alpha-D-ribose 1-diphosphate.

Belongs to the UPRTase family. Mg(2+) is required as a cofactor.

The catalysed reaction is UMP + diphosphate = 5-phospho-alpha-D-ribose 1-diphosphate + uracil. Its pathway is pyrimidine metabolism; UMP biosynthesis via salvage pathway; UMP from uracil: step 1/1. Allosterically activated by GTP. Its function is as follows. Catalyzes the conversion of uracil and 5-phospho-alpha-D-ribose 1-diphosphate (PRPP) to UMP and diphosphate. The sequence is that of Uracil phosphoribosyltransferase from Campylobacter jejuni subsp. jejuni serotype O:6 (strain 81116 / NCTC 11828).